The primary structure comprises 594 residues: MARSRRRSSVDEMDVGGSATSEYENCGGPSFSPLNLSRPKKSTRGRSLRSAQAWGGKQLHPERSTPLARNDCGPSSKPRRRHEVGRSNKGLGASLDRTDEDTSQCPRIRASAIRCGASTRKIVRITGECDAQQGDSRPGRSEMAGWHSPPKRRRTPSRHGNSDNERSHLPRLSSHGVVRVGGRPLTQTPLQKTIILQPKLVRKVFMPTFTVNPEMHYRRVALGEIPKFGGAGSYGEVQIFKQTGLAIKTASSRSCFEHELAVSLLTGECSLRAQASLGIGGIICLMAFSLPSKQMVFPAYDADLNAYGYRLSRSGPPSVLVTESIERAFIGLGRALVYLNTSCGLTHLDVKGGNIFVNHSHFVISDCVIGDLSLMTLNTNSMAMRAEFEIDTGEEEIKTLRLPRSASQMTFSFVIGHGLNQPISVIADFINNSGLAKSTGPIKHDVGLTIDLYALGQALLELLLVGCISPCLSVPILRTATYYYYSNKLSVDYALDLLAYRCSLYPALFPTTPLTTIYGIPWDQVEGVFESIAGAHHREAFRAHLERYRLTHRRLFASIRIPSAFTGVLELVSLLCHANEKARLSIPLLWTPRP.

Disordered stretches follow at residues 1–105 and 128–183; these read MARS…TSQC and ECDA…VGGR. Residues 38-47 are compositionally biased toward basic residues; the sequence is RPKKSTRGRS. The 372-residue stretch at 223–594 folds into the Protein kinase domain; it reads GEIPKFGGAG…SIPLLWTPRP (372 aa). Residues 229–237 and lysine 248 contribute to the ATP site; that span reads GGAGSYGEV. Aspartate 349 serves as the catalytic Proton acceptor.

This sequence belongs to the protein kinase superfamily. Ser/Thr protein kinase family. In terms of processing, autophosphorylated.

The protein localises to the virion tegument. It is found in the host nucleus. The catalysed reaction is L-seryl-[protein] + ATP = O-phospho-L-seryl-[protein] + ADP + H(+). It catalyses the reaction L-threonyl-[protein] + ATP = O-phospho-L-threonyl-[protein] + ADP + H(+). Multifunctional serine/threonine kinase that plays a role in several processes including egress of virus particles from the nucleus, modulation of the actin cytoskeleton and regulation of viral and cellular gene expression. Regulates the nuclear localization of viral envelopment factors UL34 and UL31 homologs, by phosphorylating the US3 kinase homolog, indicating a role in nuclear egress. Disrupts host nuclear lamins, including LMNA and LMNB1. Phosphorylates the viral Fc receptor composed of glycoproteins E (gE) and I (gI). Phosphorylation of glycoprotein E (gE) by UL13 homolog alters its subcellular localization, from the host early endosome to the plasma membrane. Participates in the transcriptional regulation of cellular and viral mRNAs mainly by phosphorylating the viral transcriptional regulator ICP22 homolog. The protein is Serine/threonine-protein kinase UL13 homolog of Equus caballus (Horse).